Consider the following 492-residue polypeptide: Argininosuccinate lyase (492 aa).

The protein belongs to the lyase 1 family. Argininosuccinate lyase subfamily.

The protein resides in the cytoplasm. The enzyme catalyses 2-(N(omega)-L-arginino)succinate = fumarate + L-arginine. The protein operates within amino-acid biosynthesis; L-arginine biosynthesis; L-arginine from L-ornithine and carbamoyl phosphate: step 3/3. This Methanoculleus marisnigri (strain ATCC 35101 / DSM 1498 / JR1) protein is Argininosuccinate lyase.